A 714-amino-acid polypeptide reads, in one-letter code: Transcription factor SFL2 (714 aa).

Residues 15–134 (AFVHKLYTML…LVYIKRRSSS (120 aa)) mediate DNA binding. Disordered regions lie at residues 187 to 467 (YYQQ…VGVT), 565 to 658 (STSV…NNTN), and 670 to 714 (SHSQ…NMNK). Pro residues-rich tracts occupy residues 193-207 (GQVP…PPHQ) and 223-235 (QPPP…PPQP). The segment covering 266 to 275 (LDQTQPLSYT) has biased composition (polar residues). Positions 276 to 285 (PQLEYQQQQY) are enriched in low complexity. Over residues 286 to 296 (PQPPLPPPPPQ) the composition is skewed to pro residues. Polar residues-rich tracts occupy residues 310 to 321 (DNLSRPSPNEQH) and 354 to 372 (SEGS…LNNE). Residues 376 to 389 (ESSTSSSSTTVTST) show a composition bias toward low complexity. 2 stretches are compositionally biased toward polar residues: residues 413-435 (SRMN…TQNG) and 444-461 (LIPS…TGTD). The segment covering 574 to 591 (GPFSTSTSTSTTSPTLSS) has biased composition (low complexity). Polar residues predominate over residues 599–608 (EPQNSTIANG). Composition is skewed to low complexity over residues 609 to 641 (TSIR…RQLS) and 648 to 658 (QQQQQPNNNTN). Basic and acidic residues predominate over residues 703 to 714 (SKSDDDTDNMNK).

The protein belongs to the HSF family.

It localises to the nucleus. Its function is as follows. Transcription factor that plays a role of activator of filamentous growth and which is involved in invasive growth at a high temperature. Required for human oral epithelium colonization and damage. Promotes filamentous growth in EFG1- and FLO8-dependent manners. Antagonizes functions of SFL1. This is Transcription factor SFL2 (SFL2) from Candida albicans (strain SC5314 / ATCC MYA-2876) (Yeast).